Consider the following 143-residue polypeptide: Small ribosomal subunit protein uS12 (143 aa).

The span at 1–20 (MGKCRGLRTARKLRSHRRDQ) shows a compositional bias: basic residues. Residues 1-26 (MGKCRGLRTARKLRSHRRDQKWHDKQ) form a disordered region. Lysine 37 participates in a covalent cross-link: Glycyl lysine isopeptide (Lys-Gly) (interchain with G-Cter in SUMO2). Lysine 54 is modified (N6-succinyllysine). Proline 62 is modified (3-hydroxyproline). Lysine 135 is subject to N6-acetyllysine.

This sequence belongs to the universal ribosomal protein uS12 family. In terms of assembly, component of the 40S small ribosomal subunit. Part of the small subunit (SSU) processome, composed of more than 70 proteins and the RNA chaperone small nucleolar RNA (snoRNA) U3. In terms of processing, hydroxylation at Pro-62 affects translation termination efficiency.

It is found in the cytoplasm. Its subcellular location is the cytosol. The protein resides in the rough endoplasmic reticulum. It localises to the nucleus. The protein localises to the nucleolus. Functionally, component of the ribosome, a large ribonucleoprotein complex responsible for the synthesis of proteins in the cell. The small ribosomal subunit (SSU) binds messenger RNAs (mRNAs) and translates the encoded message by selecting cognate aminoacyl-transfer RNA (tRNA) molecules. The large subunit (LSU) contains the ribosomal catalytic site termed the peptidyl transferase center (PTC), which catalyzes the formation of peptide bonds, thereby polymerizing the amino acids delivered by tRNAs into a polypeptide chain. The nascent polypeptides leave the ribosome through a tunnel in the LSU and interact with protein factors that function in enzymatic processing, targeting, and the membrane insertion of nascent chains at the exit of the ribosomal tunnel. Plays an important role in translational accuracy. Part of the small subunit (SSU) processome, first precursor of the small eukaryotic ribosomal subunit. During the assembly of the SSU processome in the nucleolus, many ribosome biogenesis factors, an RNA chaperone and ribosomal proteins associate with the nascent pre-rRNA and work in concert to generate RNA folding, modifications, rearrangements and cleavage as well as targeted degradation of pre-ribosomal RNA by the RNA exosome. The polypeptide is Small ribosomal subunit protein uS12 (RPS23) (Bos taurus (Bovine)).